The sequence spans 246 residues: Bis(5'-nucleosyl)-tetraphosphatase PrpE [asymmetrical] (246 aa).

The protein belongs to the PrpE family. Ni(2+) is required as a cofactor.

It carries out the reaction P(1),P(4)-bis(5'-guanosyl) tetraphosphate + H2O = GMP + GTP + 2 H(+). In terms of biological role, asymmetrically hydrolyzes Ap4p to yield AMP and ATP. This Bacillus cereus (strain ZK / E33L) protein is Bis(5'-nucleosyl)-tetraphosphatase PrpE [asymmetrical].